The chain runs to 470 residues: Pyoverdine export outer membrane protein OpmQ (470 aa).

The N-terminal stretch at 1–18 (MTLPRHLCLLPLSLSLLA) is a signal peptide. Cys19 carries N-palmitoyl cysteine lipidation. A lipid anchor (S-diacylglycerol cysteine) is attached at Cys19.

This sequence belongs to the outer membrane factor (OMF) (TC 1.B.17) family. In terms of assembly, part of the tripartite efflux system PvdRT-OpmQ, which is composed of an inner membrane component with both ATPase and permease domains, PvdT, a periplasmic membrane fusion protein, PvdR, and an outer membrane component, OpmQ.

It localises to the cell outer membrane. Functionally, part of the tripartite efflux system PvdRT-OpmQ required for the secretion into the extracellular milieu of the siderophore pyoverdine (PVD), which is involved in iron acquisition. The system is responsible for export of newly synthesized PVD after the final steps of biosynthesis have taken place in the periplasm. It is also responsible for recycling of PVD after internalization of ferri-PVD into the periplasm by the outer-membrane receptor FpvA and release of iron from PVD, thus making PVD available for new cycles of iron uptake. Contributes to resistance against ampicillin. The protein is Pyoverdine export outer membrane protein OpmQ of Pseudomonas putida (strain ATCC 47054 / DSM 6125 / CFBP 8728 / NCIMB 11950 / KT2440).